The chain runs to 600 residues: ATP-dependent RNA helicase DDX55 (600 aa).

The Q motif motif lies at 9 to 37 (WESLQVPLHPRVLGALRELGFPHMTPVQS). The Helicase ATP-binding domain occupies 40-223 (IPLFMKNKDV…RAGLRNPVRI (184 aa)). 53 to 60 (AVTGSGKT) is an ATP binding site. Residues 171 to 174 (DEAD) carry the DEAD box motif. Positions 254–402 (KFNQLVHFLR…EMSLQRNTID (149 aa)) constitute a Helicase C-terminal domain. Residues 499 to 513 (LEQKRKERSENEGRK) are compositionally biased toward basic and acidic residues. The segment at 499–551 (LEQKRKERSENEGRKKFIKNKAWSKQKAKKERKKKMNAKRKKDEGSDIDDEDM) is disordered. Basic residues predominate over residues 514–538 (KFIKNKAWSKQKAKKERKKKMNAKR). The tract at residues 533-562 (KMNAKRKKDEGSDIDDEDMEELLNDTRLLK) is important for nuclear localization. Phosphoserine occurs at positions 544 and 594.

The protein belongs to the DEAD box helicase family. DDX55/SPB4 subfamily. In terms of assembly, interacts with 28S rRNA. Interacts with double-stranded RNA substrates in vitro; the interaction stimulates ATPase activity.

The protein localises to the nucleus. The protein resides in the nucleoplasm. It carries out the reaction ATP + H2O = ADP + phosphate + H(+). Functionally, probable ATP-binding RNA helicase. Has ATPase activity and is involved in the maturation of precursor large subunit rRNAs. This chain is ATP-dependent RNA helicase DDX55 (Ddx55), found in Mus musculus (Mouse).